The sequence spans 1436 residues: ABC transporter C family member 15 (1436 aa).

Transmembrane regions (helical) follow at residues 8 to 28 (IINK…IYLY), 129 to 149 (YIAT…PLIL), 165 to 185 (IYIG…NMAS), 238 to 258 (FFQY…IQIL), 261 to 281 (LGFL…VMLI), 349 to 369 (IIYW…VLVS), and 373 to 393 (TYTL…ITIL). One can recognise an ABC transmembrane type-1 1 domain in the interval 128-412 (NYIATGLFVF…LPDCLHKFIS (285 aa)). One can recognise an ABC transporter 1 domain in the interval 543-766 (ADYQDLLSIN…IDFEMILKEK (224 aa)). 575-582 (GGVRSGKT) is a binding site for ATP. The region spanning 865-1155 (KKYIRMGSSI…FMRQFGELES (291 aa)) is the ABC transmembrane type-1 2 domain. The next 6 helical transmembrane spans lie at 873–893 (SISF…ILLL), 919–939 (LIYL…YLLI), 985–1005 (IDIL…CLVT), 1017–1039 (IAIP…NYSV), 1101–1121 (IGIR…LFSI), and 1127–1147 (GLSA…NWFM). Residues 1193–1426 (IEFKNVEIRY…STSRFSKLIK (234 aa)) enclose the ABC transporter 2 domain. 1227-1234 (GRSGSGKS) provides a ligand contact to ATP.

This sequence belongs to the ABC transporter superfamily. ABCC family. Conjugate transporter (TC 3.A.1.208) subfamily.

It is found in the membrane. This is ABC transporter C family member 15 (abcC15) from Dictyostelium discoideum (Social amoeba).